A 216-amino-acid polypeptide reads, in one-letter code: Uridine kinase (216 aa).

Residue 16–23 coordinates ATP; it reads GASASGKS.

Belongs to the uridine kinase family.

Its subcellular location is the cytoplasm. The enzyme catalyses uridine + ATP = UMP + ADP + H(+). It carries out the reaction cytidine + ATP = CMP + ADP + H(+). Its pathway is pyrimidine metabolism; CTP biosynthesis via salvage pathway; CTP from cytidine: step 1/3. The protein operates within pyrimidine metabolism; UMP biosynthesis via salvage pathway; UMP from uridine: step 1/1. The chain is Uridine kinase from Pasteurella multocida (strain Pm70).